The sequence spans 155 residues: Ribonuclease H (155 aa).

The region spanning 4–145 is the RNase H type-1 domain; that stretch reads ETKVIEIYTD…ADALARKAIT (142 aa). Mg(2+)-binding residues include Asp-13, Glu-51, Asp-73, and Asp-137.

Belongs to the RNase H family. In terms of assembly, monomer. Requires Mg(2+) as cofactor.

It localises to the cytoplasm. The catalysed reaction is Endonucleolytic cleavage to 5'-phosphomonoester.. Functionally, endonuclease that specifically degrades the RNA of RNA-DNA hybrids. The protein is Ribonuclease H of Bartonella bacilliformis (strain ATCC 35685 / KC583 / Herrer 020/F12,63).